Here is a 744-residue protein sequence, read N- to C-terminus: Dolasta-1(15),8-diene synthase (744 aa).

A terpene cyclase region spans residues 1–344; that stretch reads MASTMMNYQD…RRYNPAAPLP (344 aa). Mg(2+)-binding residues include aspartate 108 and aspartate 112. Substrate is bound by residues aspartate 108, aspartate 112, 198–201, 246–250, and 336–337; these read RHYD, SWDKE, and RY. The DDXXD motif lies at 108 to 112; sequence DDLTD. The segment at 345–744 is prenyltransferase; the sequence is RREDIGKVNG…LHLITFQLKV (400 aa). The interval 399-422 is disordered; it reads YTTMTPAETSSDDKKKKAKASHET. A compositionally biased stretch (basic and acidic residues) spans 409-422; that stretch reads SDDKKKKAKASHET. 2 residues coordinate isopentenyl diphosphate: arginine 459 and histidine 488. The Mg(2+) site is built by aspartate 495 and aspartate 499. Positions 495–499 match the DDXXD motif; the sequence is DDVQD. Dimethylallyl diphosphate is bound at residue arginine 504. Residue arginine 505 participates in isopentenyl diphosphate binding. Dimethylallyl diphosphate-binding residues include lysine 581, threonine 582, and glutamine 617.

In the N-terminal section; belongs to the terpene synthase family. It in the C-terminal section; belongs to the FPP/GGPP synthase family. Hexamer. Mg(2+) is required as a cofactor.

The catalysed reaction is isopentenyl diphosphate + (2E,6E)-farnesyl diphosphate = (2E,6E,10E)-geranylgeranyl diphosphate + diphosphate. It carries out the reaction (2E,6E,10E)-geranylgeranyl diphosphate = (5R,12R,14S)-dolasta-1(15),8-diene + diphosphate. The enzyme catalyses (2E,6E,10E)-geranylgeranyl diphosphate = delta-araneosene + diphosphate. Its function is as follows. Bifunctional terpene synthase involved in the biosynthesis of the diterpenes delta-araneosene and dolasta-1(15),8-diene. The C-terminal prenyltransferase domain of CgDS catalyzes formation of the universal precursor of diterpene, geranylgeranyl diphosphate (GGPP), whereas the N-terminal terpene cyclase domain catalyzes the cyclization of GGPP to the intermediate delta-araneosene that is further converted to dolasta-1(15),8-diene in a second cyclization event. In some cases the cyclization stops at the delta-araneosene stage. In Colletotrichum gloeosporioides (Anthracnose fungus), this protein is Dolasta-1(15),8-diene synthase.